We begin with the raw amino-acid sequence, 121 residues long: MSITKDQIIEAVAAMSVMDVVELISAMEEKFGVSAAAAVAVAAGPVETAEEKTEFDVILKAAGANKVAVIKAVRGATGLGLKEAKDLVESAPAALKEGVSKDDAEALKKALEEAGAEVEVK.

Belongs to the bacterial ribosomal protein bL12 family. As to quaternary structure, homodimer. Part of the ribosomal stalk of the 50S ribosomal subunit. Forms a multimeric L10(L12)X complex, where L10 forms an elongated spine to which 2 to 4 L12 dimers bind in a sequential fashion. Binds GTP-bound translation factors.

Forms part of the ribosomal stalk which helps the ribosome interact with GTP-bound translation factors. Is thus essential for accurate translation. This is Large ribosomal subunit protein bL12 from Escherichia coli O81 (strain ED1a).